Here is a 151-residue protein sequence, read N- to C-terminus: Large ribosomal subunit protein uL30 (151 aa).

It belongs to the universal ribosomal protein uL30 family. Part of the 50S ribosomal subunit.

This is Large ribosomal subunit protein uL30 from Methanothrix thermoacetophila (strain DSM 6194 / JCM 14653 / NBRC 101360 / PT) (Methanosaeta thermophila).